Here is a 371-residue protein sequence, read N- to C-terminus: Glutamate 5-kinase (371 aa).

K10 is a binding site for ATP. 3 residues coordinate substrate: S50, D137, and N149. ATP is bound by residues 169–170 and 208–214; these read SD and TGGMYTK. The PUA domain occupies 274-352; the sequence is QGKVYIDDGA…EEIKNILGED (79 aa).

Belongs to the glutamate 5-kinase family.

The protein resides in the cytoplasm. It carries out the reaction L-glutamate + ATP = L-glutamyl 5-phosphate + ADP. Its pathway is amino-acid biosynthesis; L-proline biosynthesis; L-glutamate 5-semialdehyde from L-glutamate: step 1/2. Functionally, catalyzes the transfer of a phosphate group to glutamate to form L-glutamate 5-phosphate. This Dictyoglomus thermophilum (strain ATCC 35947 / DSM 3960 / H-6-12) protein is Glutamate 5-kinase.